A 135-amino-acid polypeptide reads, in one-letter code: CTP pyrophosphohydrolase (135 aa).

Residues 2-127 (KMIEVVAAII…DIPLLEAFMA (126 aa)) form the Nudix hydrolase domain. Substrate-binding positions include 34 to 39 (FAGGKV), arginine 72, and aspartate 118. Positions 37-58 (GKVEPDESQRQALVRELREELG) match the Nudix box motif.

It belongs to the Nudix hydrolase family. In terms of assembly, monomer. The cofactor is Mg(2+). Requires Mn(2+) as cofactor.

It carries out the reaction CTP + H2O = CMP + diphosphate + H(+). It catalyses the reaction dCTP + H2O = dCMP + diphosphate + H(+). Hydrolase with a preference for pyrimidine substrates. Has high activity with 5-methyl-dCTP, and much lower activity with CTP, dCTP, 5-hydroxy-dCTP, 2-hydroxy-dATP and 8-hydroxy-dGTP. The polypeptide is CTP pyrophosphohydrolase (nudG) (Escherichia coli (strain K12)).